Consider the following 187-residue polypeptide: UPF0301 protein HSM_1900 (187 aa).

The protein belongs to the UPF0301 (AlgH) family.

The polypeptide is UPF0301 protein HSM_1900 (Histophilus somni (strain 2336) (Haemophilus somnus)).